The chain runs to 420 residues: Transcription factor dbaG (420 aa).

Its subcellular location is the nucleus. Functionally, transcription factor that coregulates the expression of the gene cluster that mediates the biosynthesis of the antibiotic 2,4- dihydroxy-3-methyl-6-(2-oxopropyl)benzaldehyde (DHMBA) and its derivatives. Specifically positively regulates the expression of the FAD-dependent oxidoreductase dbaF. The chain is Transcription factor dbaG from Emericella nidulans (strain FGSC A4 / ATCC 38163 / CBS 112.46 / NRRL 194 / M139) (Aspergillus nidulans).